Consider the following 549-residue polypeptide: Zinc finger protein 266 (549 aa).

Positions 1-42 (MLENYKNLATVGYQLFKPSLISWLEQEESRTVQRGDFQASEW) constitute a KRAB domain. The segment at 156 to 178 (FDCSDSGKSFINHSHLQGHLRTH) adopts a C2H2-type 1; degenerate zinc-finger fold. The C2H2-type 2; degenerate zinc finger occupies 184-206 (HEWKECGRGFIHSTDLAVRIQTH). 12 consecutive C2H2-type zinc fingers follow at residues 212–234 (YKCK…MGTH), 240–262 (YECK…RKTH), 268–290 (YKCK…MKIH), 296–318 (YECK…LKTH), 324–346 (FECK…FRIH), 352–374 (YKCK…ARTH), 380–402 (YECK…TRTH), 408–430 (FECV…LRIH), 436–458 (FECL…MRTH), 464–486 (FTCM…MRIH), 492–514 (YKCK…ERTH), and 520–542 (YECK…ERRH). A disordered region spans residues 530 to 549 (SSSSSFRNHERRHADERLSA).

Belongs to the krueppel C2H2-type zinc-finger protein family.

It localises to the nucleus. In terms of biological role, may be involved in transcriptional regulation. This chain is Zinc finger protein 266 (ZNF266), found in Homo sapiens (Human).